A 163-amino-acid polypeptide reads, in one-letter code: PTS system fructose-specific EIIB component (163 aa).

Positions 1–163 (MMNIVLARID…FVQILRNVTK (163 aa)) constitute a PTS EIIB type-4 domain. His15 functions as the Pros-phosphohistidine intermediate in the catalytic mechanism. His15 carries the phosphohistidine; by EIIA modification.

It localises to the cytoplasm. The catalysed reaction is D-fructose(out) + N(pros)-phospho-L-histidyl-[protein] = D-fructose 1-phosphate(in) + L-histidyl-[protein]. Functionally, the phosphoenolpyruvate-dependent sugar phosphotransferase system (sugar PTS), a major carbohydrate active -transport system, catalyzes the phosphorylation of incoming sugar substrates concomitantly with their translocation across the cell membrane. The enzyme II LevDE PTS system is involved in fructose transport. In terms of biological role, levD and LevE act as negative regulators of the levanase operon. They may be involved in a PTS-mediated phosphorylation of a regulator. The chain is PTS system fructose-specific EIIB component from Bacillus subtilis (strain 168).